A 405-amino-acid chain; its full sequence is SPbeta prophage-derived uncharacterized protein YonJ (405 aa).

A coiled-coil region spans residues 72–101; it reads DESNNSLLELELKKVEIMEERKKLQAVKHE.

This Bacillus subtilis (strain 168) protein is SPbeta prophage-derived uncharacterized protein YonJ (yonJ).